The following is a 90-amino-acid chain: MANSAQARKRARQAAKANSHNSALRSKFRTAIKSVRKAVEAGDQAKAAELFKAAVKTIDTIADKKIVHKNKAARSKSRLAAAVKGLQAAA.

The tract at residues 1–25 is disordered; it reads MANSAQARKRARQAAKANSHNSALR.

The protein belongs to the bacterial ribosomal protein bS20 family.

Binds directly to 16S ribosomal RNA. This Burkholderia orbicola (strain MC0-3) protein is Small ribosomal subunit protein bS20.